Here is a 260-residue protein sequence, read N- to C-terminus: Snake venom serine protease KN14 (260 aa).

Positions 1–18 are cleaved as a signal peptide; it reads MVLIRVLANLLILQLSYA. Positions 19–24 are excised as a propeptide; sequence QKSSEL. The Peptidase S1 domain maps to 25-251; the sequence is VIGGDECNIN…HLDWIQSIIA (227 aa). 5 cysteine pairs are disulfide-bonded: cysteine 31/cysteine 165, cysteine 100/cysteine 258, cysteine 144/cysteine 212, cysteine 176/cysteine 191, and cysteine 202/cysteine 227. Histidine 67 serves as the catalytic Charge relay system. The N-linked (GlcNAc...) asparagine glycan is linked to asparagine 105. Aspartate 112 functions as the Charge relay system in the catalytic mechanism. An N-linked (GlcNAc...) asparagine glycan is attached at asparagine 172. Serine 206 serves as the catalytic Charge relay system. N-linked (GlcNAc...) asparagine glycosylation is found at asparagine 213 and asparagine 255.

It belongs to the peptidase S1 family. Snake venom subfamily. In terms of assembly, monomer. Expressed by the venom gland.

The protein resides in the secreted. In terms of biological role, snake venom serine protease that may act in the hemostasis system of the prey. This chain is Snake venom serine protease KN14, found in Trimeresurus stejnegeri (Chinese green tree viper).